Consider the following 429-residue polypeptide: Light-independent protochlorophyllide reductase subunit N (429 aa).

Residues Cys-32, Cys-57, and Cys-118 each coordinate [4Fe-4S] cluster.

Belongs to the BchN/ChlN family. As to quaternary structure, protochlorophyllide reductase is composed of three subunits; BchL, BchN and BchB. Forms a heterotetramer of two BchB and two BchN subunits. Requires [4Fe-4S] cluster as cofactor.

It carries out the reaction chlorophyllide a + oxidized 2[4Fe-4S]-[ferredoxin] + 2 ADP + 2 phosphate = protochlorophyllide a + reduced 2[4Fe-4S]-[ferredoxin] + 2 ATP + 2 H2O. It participates in porphyrin-containing compound metabolism; bacteriochlorophyll biosynthesis (light-independent). Component of the dark-operative protochlorophyllide reductase (DPOR) that uses Mg-ATP and reduced ferredoxin to reduce ring D of protochlorophyllide (Pchlide) to form chlorophyllide a (Chlide). This reaction is light-independent. The NB-protein (BchN-BchB) is the catalytic component of the complex. In Rhodopseudomonas palustris (strain TIE-1), this protein is Light-independent protochlorophyllide reductase subunit N.